A 525-amino-acid polypeptide reads, in one-letter code: GMP synthase [glutamine-hydrolyzing] (525 aa).

The 199-residue stretch at 9 to 207 (RILILDFGSQ…VLDICGCEAL (199 aa)) folds into the Glutamine amidotransferase type-1 domain. Cys-86 acts as the Nucleophile in catalysis. Residues His-181 and Glu-183 contribute to the active site. Residues 208–400 (WTPSKIAEDA…LGLPYDMVYR (193 aa)) form the GMPS ATP-PPase domain. 235–241 (SGGVDSS) contributes to the ATP binding site.

As to quaternary structure, homodimer.

The catalysed reaction is XMP + L-glutamine + ATP + H2O = GMP + L-glutamate + AMP + diphosphate + 2 H(+). Its pathway is purine metabolism; GMP biosynthesis; GMP from XMP (L-Gln route): step 1/1. Functionally, catalyzes the synthesis of GMP from XMP. The protein is GMP synthase [glutamine-hydrolyzing] of Pseudomonas fluorescens (strain Pf0-1).